Consider the following 865-residue polypeptide: Armadillo repeat-containing protein 2 (865 aa).

Disordered stretches follow at residues 39–75 and 214–243; these read TVRT…FSVH and SVPF…DQSR. A compositionally biased stretch (polar residues) spans 60-75; it reads SSRTPENRPPSSFSVH. 12 ARM repeats span residues 261–300, 303–343, 362–402, 407–448, 461–502, 505–546, 550–587, 589–614, 617–660, 662–703, 705–744, and 746–788; these read IEVD…HALE, NMLG…ALKV, EKND…TIKF, PEFL…HLLV, PLAR…KLTS, DCCV…NLTA, QARE…GEGD, RPEA…NLAI, GVGP…NLSY, KVKN…NLSQ, HDIC…NLTV, and RDKR…NFSE.

Its function is as follows. Required for sperm flagellum axoneme organization and function. Involved in axonemal central pair complex assembly and/or stability. In Bos taurus (Bovine), this protein is Armadillo repeat-containing protein 2.